The following is a 654-amino-acid chain: Collagen alpha-1(XXV) chain (654 aa).

The tract at residues Met1–His26 is disordered. At Met1 to Pro33 the chain is on the cytoplasmic side. A helical; Signal-anchor for type II membrane protein membrane pass occupies residues Cys34–Val54. At Lys55 to Lys654 the chain is on the extracellular side. Residue Glu113 is modified to Pyrrolidone carboxylic acid (Glu). Residues Ser116 to Pro168 are disordered. The Collagen-like 1 domain maps to Pro121–Arg164. Residues Pro140–Pro151 are compositionally biased toward pro residues. Residues Leu181 to Lys188 form an interaction with amyloid-beta peptide region. Disordered regions lie at residues Gly189 to Thr426 and Leu445 to Lys654. 5 consecutive Collagen-like domains span residues Gly192–Ser247, Gly249–Ser308, Gly311–Pro370, Arg372–Ala425, and Val447–Pro505. Residues Pro196 to Pro208 are compositionally biased toward pro residues. Residues Pro230–Lys245 show a composition bias toward low complexity. The span at Glu280–Ala290 shows a compositional bias: basic and acidic residues. Positions Leu336–Pro358 are enriched in low complexity. Basic and acidic residues-rich tracts occupy residues Lys361–Glu377 and Ser398–Asp407. Over residues Gln457 to Gln466 the composition is skewed to low complexity. Over residues Gly494–Gly503 the composition is skewed to gly residues. The span at Ser517 to Ile527 shows a compositional bias: low complexity. Over residues Ile528–Met543 the composition is skewed to pro residues. Residues Gly571–Pro630 enclose the Collagen-like 7 domain. The segment covering Arg603–Glu626 has biased composition (basic and acidic residues).

As to quaternary structure, forms homodimers and homotrimers. Binds to the fibrillized forms of amyloid-beta protein 40 (beta-APP40) and amyloid-beta protein 42 (beta-APP42). Found associated with beta-APP42 more frequently than with beta-APP40. Post-translationally, undergoes proteolytic cleavage by furin protease to yield the soluble collagen-like Alzheimer amyloid plaque component. In terms of processing, glycosylated. Hydroxylated on 11% of proline residues and 49% of lysine residues. As to expression, expressed predominantly in brain. Deposited preferentially in primitive or neuritic amyloid plaques which are typical of Alzheimer disease.

The protein resides in the membrane. Functionally, inhibits fibrillization of amyloid-beta peptide during the elongation phase. Has also been shown to assemble amyloid fibrils into protease-resistant aggregates. Binds heparin. The protein is Collagen alpha-1(XXV) chain of Homo sapiens (Human).